The chain runs to 152 residues: Lipoprotein signal peptidase (152 aa).

Transmembrane regions (helical) follow at residues 55–75 (NKMW…VFYM) and 85–105 (LGIS…DRVF). Catalysis depends on residues Asp111 and Asp129. A helical transmembrane segment spans residues 124–144 (VFNIADSALCIGVVLIIIQTL).

It belongs to the peptidase A8 family.

Its subcellular location is the cell membrane. The enzyme catalyses Release of signal peptides from bacterial membrane prolipoproteins. Hydrolyzes -Xaa-Yaa-Zaa-|-(S,diacylglyceryl)Cys-, in which Xaa is hydrophobic (preferably Leu), and Yaa (Ala or Ser) and Zaa (Gly or Ala) have small, neutral side chains.. Its pathway is protein modification; lipoprotein biosynthesis (signal peptide cleavage). Functionally, this protein specifically catalyzes the removal of signal peptides from prolipoproteins. The chain is Lipoprotein signal peptidase from Bacillus cereus (strain B4264).